A 937-amino-acid polypeptide reads, in one-letter code: Protein Niban 1 (937 aa).

Gly2 carries the N-myristoyl glycine lipid modification. Ser578, Ser581, Ser595, Ser601, and Ser646 each carry phosphoserine. The span at 584-595 (DLKTSMGSNQAS) shows a compositional bias: polar residues. 2 disordered regions span residues 584–710 (DLKT…GSLR) and 724–891 (SAPE…LGGN). The span at 640 to 651 (ASISGSSPPSGE) shows a compositional bias: low complexity. Residues 655-681 (VSVSGVDNSAGNPLSADNSAGPLSSHL) show a composition bias toward polar residues. A compositionally biased stretch (basic and acidic residues) spans 688-701 (EPPKDEETAHKRPE). Ser708 and Ser768 each carry phosphoserine. Composition is skewed to polar residues over residues 802-817 (PTSQ…NTSC) and 855-869 (VTVT…SSNP).

It belongs to the Niban family. As to expression, detected in brain, lung, spleen and skeletal muscle. Expressed in small renal tumors but not in normal kidney.

Its subcellular location is the cytoplasm. It is found in the membrane. Functionally, regulates phosphorylation of a number of proteins involved in translation regulation including EIF2A, EIF4EBP1 and RPS6KB1. May be involved in the endoplasmic reticulum stress response. This is Protein Niban 1 from Rattus norvegicus (Rat).